The primary structure comprises 393 residues: uncharacterized protein (393 aa).

The 140-residue stretch at 250–389 folds into the Flavodoxin-like domain; sequence AVIVYDTMYN…KCYEFGKRLA (140 aa).

This is an uncharacterized protein from Methanocaldococcus jannaschii (strain ATCC 43067 / DSM 2661 / JAL-1 / JCM 10045 / NBRC 100440) (Methanococcus jannaschii).